The primary structure comprises 1045 residues: MSDSQQSVEVLNQLLARLSVATPDNRDEVATEVSSFVNGNIIEHDAPEHFFNGLAKAIKDKKSAVNALAAVSHVASTSGLAPSVEPYVVALVPAILEQTGSKDKDVQSAANAALHAVVTAVNPVAVKAVLPHLTKSLSETNKWQEKVAVLSAISALVDQAKSQISLRMTELIPVLSEAMWDTKKEVKNAATATMTKATETVENKDIERFIPKLIECIANPSEVPETVHLLGATTFVAEVTPATLSIMTPLLSRGLAERETPIKRKSAVIIDNMCKLVEDPQIVAPFLNKLLPGLKNNFSVIADPEAREVTLRGLKTLRRVGAVGEGDVLPEISHAGDPATTLGVLDSLLKTENIAKKFRPAVEYISCIGGDLIDERIIDQQTWFTHVLPYMTIFLHQNQAKEILDEFRKRAVDNIPEPPKFDDEEEEGEDLCNCEFSLAYGAKILLNRTQLRLKRGRRYGLCGPNGSGKSTLMRAIANGQVDGFPSQEECRTVYVEHDIDGTHAETSVLDFVFQGDVGTKEAISAKLKEFGFDDEMIVMPIAALSGGWKMKLALARAVLKNADILLLDEPTNHLDTVNVAWLTNYLITCGITSIVVSHDSGFLDNICQYIIHYEGLKLRKYKGNLSALVERVPSAKSYYELGASDLEFRFPEPGYLEGVKTKQKAIVKVSNMTFQYPGTSKPQISDVSFQCSLSSRIAVIGPNGAGKSTLINVLTGELLPTTGEVYTHENIRIAYIKQHAFAHIESHLDKTPSEYIQWRFQTGEDRETMDRANRQINEDDAQAMNKIFKIDGTPRRIAGIHSRRKFKNSYEYECSFLLGENIGMKSERWVPMMSVDNAWLPRGEVIESHGKMVAEVDMKEALASGQFRPLTRKEIEEHCAMLGLDAELVSHSRIRGLSGGQKVKLVLAAGTWQRPHLIVLDEPTNYLDRDSLGALSKALKEFEGGVIIITHSAEFTKDLTEEVWAVRDGLMTPSGHNWVSGQGSGPRLEKKEDEEDKFDAMGNKISSGTKKTKLSSAELRKKKKERMKKKKELGDAYVSDDDADF.

Residues Ile-42, His-44, and Ser-83 each coordinate ADP. HEAT repeat units follow at residues 86–123 (PYVVALVPAILEQTGSKDKDVQSAANAALHAVVTAVNP), 125–162 (AVKAVLPHLTKSLSETNKWQEKVAVLSAISALVDQAKS), 166–203 (LRMTELIPVLSEAMWDTKKEVKNAATATMTKATETVEN), 171–209 (LIPVLSEAMWDTKKEVKNAATATMTKATETVENKDIERF), 205–241 (DIERFIPKLIECIANPSEVPETVHLLGATTFVAEVTP), 242–279 (ATLSIMTPLLSRGLAERETPIKRKSAVIIDNMCKLVED), and 285–323 (PFLNKLLPGLKNNFSVIADPEAREVTLRGLKTLRRVGAV). 2 residues coordinate ADP: Thr-392 and His-396. 2 consecutive ABC transporter domains span residues 426–641 (EEGE…YYEL) and 667–993 (VKVS…KKED). Asn-703, Glu-922, Asn-925, and His-951 together coordinate ADP. The segment at 975-1045 (GHNWVSGQGS…AYVSDDDADF (71 aa)) is disordered. Basic residues predominate over residues 1020-1031 (RKKKKERMKKKK).

Belongs to the ABC transporter superfamily. ABCF family. EF3 subfamily.

Its subcellular location is the cytoplasm. The protein localises to the cytosol. It catalyses the reaction ATP + H2O = ADP + phosphate + H(+). It participates in protein biosynthesis; polypeptide chain elongation. Ribosome-dependent ATPase that functions in cytoplasmic translation elongation. Required for the ATP-dependent release of deacylated tRNA from the ribosomal E-site during protein biosynthesis. Stimulates the eEF1A-dependent binding of aminoacyl-tRNA to the ribosomal A-site, which has reduced affinity for tRNA as long as the E-site is occupied. Assists translation termination by stimulating the release of nascent protein from the ribosome by release factors. This is Elongation factor 3 from Zygosaccharomyces rouxii (strain ATCC 2623 / CBS 732 / NBRC 1130 / NCYC 568 / NRRL Y-229).